The primary structure comprises 543 residues: CTP synthase (543 aa).

The amidoligase domain stretch occupies residues 1–265; that stretch reads MARYIFITGG…DEEVLAAFGI (265 aa). Position 13 (serine 13) interacts with CTP. Serine 13 is a binding site for UTP. 14 to 19 is an ATP binding site; that stretch reads SLGKGL. An L-glutamine-binding site is contributed by tyrosine 54. Aspartate 71 serves as a coordination point for ATP. Residues aspartate 71 and glutamate 139 each coordinate Mg(2+). CTP-binding positions include 146–148, 186–191, and lysine 222; these read DIE and KTKPTQ. UTP-binding positions include 186-191 and lysine 222; that span reads KTKPTQ. 238–240 serves as a coordination point for ATP; that stretch reads RDA. The region spanning 291-542 is the Glutamine amidotransferase type-1 domain; it reads TIAIVGKYTG…IEAAMAQSRL (252 aa). Glycine 353 provides a ligand contact to L-glutamine. The active-site Nucleophile; for glutamine hydrolysis is cysteine 380. L-glutamine is bound by residues 381–384, glutamate 404, and arginine 470; that span reads FGMQ. Catalysis depends on residues histidine 515 and glutamate 517.

It belongs to the CTP synthase family. In terms of assembly, homotetramer.

The enzyme catalyses UTP + L-glutamine + ATP + H2O = CTP + L-glutamate + ADP + phosphate + 2 H(+). It catalyses the reaction L-glutamine + H2O = L-glutamate + NH4(+). The catalysed reaction is UTP + NH4(+) + ATP = CTP + ADP + phosphate + 2 H(+). It functions in the pathway pyrimidine metabolism; CTP biosynthesis via de novo pathway; CTP from UDP: step 2/2. Allosterically activated by GTP, when glutamine is the substrate; GTP has no effect on the reaction when ammonia is the substrate. The allosteric effector GTP functions by stabilizing the protein conformation that binds the tetrahedral intermediate(s) formed during glutamine hydrolysis. Inhibited by the product CTP, via allosteric rather than competitive inhibition. In terms of biological role, catalyzes the ATP-dependent amination of UTP to CTP with either L-glutamine or ammonia as the source of nitrogen. Regulates intracellular CTP levels through interactions with the four ribonucleotide triphosphates. This chain is CTP synthase, found in Rhodopseudomonas palustris (strain BisA53).